We begin with the raw amino-acid sequence, 629 residues long: Ionotropic receptor 75a (629 aa).

The Extracellular segment spans residues 1–335 (MQLVQLANFV…GDVFLQPFSP (335 aa)). N-linked (GlcNAc...) asparagine glycans are attached at residues N61, N112, N126, N144, N166, and N232. A helical transmembrane segment spans residues 336 to 356 (LVWYLFGGVLSLIGVLLWITF). Residues 357–374 (YMECKRMQKRWRLDYLPS) are Cytoplasmic-facing. A helical membrane pass occupies residues 375 to 395 (LLSTFLISFGAACIQSSSLIP). Residues 396–402 (RSAGGRL) are Extracellular-facing. A helical transmembrane segment spans residues 403 to 423 (IYFALFLISFIMYNYYTSVVV). Residues 424–592 (SSLLSSPVKS…NFVITVGMEY (169 aa)) are Cytoplasmic-facing. A helical membrane pass occupies residues 593-613 (VAPLLLMLICADILVVVILLV). At 614-629 (ELAWKRFFTRPLTIHP) the chain is on the extracellular side.

Belongs to the glutamate-gated ion channel (TC 1.A.10.1) family. As to expression, expressed in neurons in the antennal coeloconic 2 (ac2) sensillum class of sensory hairs (at protein level).

Its subcellular location is the cell membrane. It is found in the cell projection. The protein resides in the dendrite. In terms of biological role, olfactory receptor for propionic, butyric and 2-oxopentanoic acids. This chain is Ionotropic receptor 75a, found in Drosophila sechellia (Fruit fly).